The chain runs to 2718 residues: Zinc finger protein 40 (2718 aa).

Disordered stretches follow at residues 58–182 (HLKK…CISS), 210–256 (LSQK…AESQ), and 335–373 (GLTS…PMPI). Position 141 is a phosphoserine (serine 141). Positions 142–158 (ELRRWRSEGADPAKFSD) are enriched in basic and acidic residues. Polar residues-rich tracts occupy residues 164–182 (DSSS…CISS) and 237–256 (KNSS…AESQ). The C2H2-type 1 zinc finger occupies 406–428 (YICEYCNRACAKPSVLLKHIRSH). Threonine 429 carries the phosphothreonine modification. The C2H2-type 2 zinc finger occupies 434–456 (YPCVTCGFSFKTKSNLYKHKKSH). Residues serine 476, serine 479, serine 492, serine 495, serine 571, and serine 577 each carry the phosphoserine modification. The disordered stretch occupies residues 484–511 (SIHSDVEDSGESEEEGATDERQHDLGAM). The segment covering 490–500 (EDSGESEEEGA) has biased composition (acidic residues). Residues 574-727 (RTDSPKAMDP…TPSALPTGEK (154 aa)) are disordered. The segment covering 576-585 (DSPKAMDPKP) has biased composition (basic and acidic residues). A compositionally biased stretch (polar residues) spans 588-612 (SSAQKQKDLQVTNVQPLSANMSQGG). The segment covering 617-626 (ETNENSHQKG) has biased composition (basic and acidic residues). Composition is skewed to polar residues over residues 644–687 (AQLQ…QTVS) and 698–721 (STEQ…TPSA). A phosphoserine mark is found at serine 670 and serine 681. The CCHC HIVEP-type zinc finger occupies 956 to 986 (GTMFECETCRNRYRKLENFENHKKFYCSELH). A disordered region spans residues 1022–1062 (WEQTPQIRKRRKMKSVGDDEELQQNESGTSPKSSEGLQFQN). Residues serine 1036, serine 1051, serine 1091, serine 1158, serine 1161, and serine 1180 each carry the phosphoserine modification. The segment covering 1045-1062 (QNESGTSPKSSEGLQFQN) has biased composition (polar residues). The segment at 1138-1169 (HTNSLSRPNSFDKPEPFERASPVSFQELNRTG) is disordered. Positions 1160 to 1169 (VSFQELNRTG) are enriched in polar residues. Basic and acidic residues-rich tracts occupy residues 1202–1219 (LRGE…ERHV) and 1246–1259 (DLEA…KSEK). Disordered stretches follow at residues 1202–1282 (LRGE…PKKK), 1384–1414 (RSKS…SRVG), and 1523–1548 (SHQS…VLSG). A Phosphothreonine modification is found at threonine 1268. Composition is skewed to low complexity over residues 1394–1406 (TPPQ…ELQP) and 1523–1536 (SHQS…VSTQ). Phosphoserine occurs at positions 1735, 1740, 1749, and 1753. A compositionally biased stretch (polar residues) spans 1871–1883 (VRSSPAPSENTHI). The tract at residues 1871–1911 (VRSSPAPSENTHISPLKCTDNNQERKSPGVKNQGDKVNIQE) is disordered. 2 positions are modified to phosphoserine: serine 1884 and serine 2033. C2H2-type zinc fingers lie at residues 2088 to 2110 (YICE…IRTH) and 2116 to 2140 (YHCT…SKAH). Disordered stretches follow at residues 2155–2228 (DEQD…PVST), 2265–2303 (SDYN…HQMS), 2327–2381 (SPSS…THLF), and 2572–2718 (PASQ…VIAT). Residues 2164–2175 (EKQRFSYERSGY) show a composition bias toward basic and acidic residues. Positions 2176–2198 (DLEESDGPDEDDNENEDDDEDSQ) are enriched in acidic residues. Polar residues-rich tracts occupy residues 2199 to 2226 (AESV…QDPV) and 2288 to 2300 (TIPS…SPCH). 2 positions are modified to phosphoserine: serine 2327 and serine 2599. The segment covering 2573–2608 (ASQSKACETQPKQTSVASANQVSRTESPQGLPTVQR) has biased composition (polar residues). Residues 2623 to 2637 (DHARLDGLSKMDTEK) show a composition bias toward basic and acidic residues. A compositionally biased stretch (polar residues) spans 2651–2663 (TSIQGQPASTSQP). Phosphoserine occurs at positions 2669 and 2682.

In terms of assembly, interacts with UTP4.

It is found in the nucleus. Its subcellular location is the cytoplasm. In terms of biological role, this protein specifically binds to the DNA sequence 5'-GGGACTTTCC-3' which is found in the enhancer elements of numerous viral promoters such as those of SV40, CMV, or HIV-1. In addition, related sequences are found in the enhancer elements of a number of cellular promoters, including those of the class I MHC, interleukin-2 receptor, and interferon-beta genes. It may act in T-cell activation. Involved in activating HIV-1 gene expression. Isoform 2 and isoform 3 also bind to the IPCS (IRF1 and p53 common sequence) DNA sequence in the promoter region of interferon regulatory factor 1 and p53 genes and are involved in transcription regulation of these genes. Isoform 2 does not activate HIV-1 gene expression. Isoform 2 and isoform 3 may be involved in apoptosis. In Homo sapiens (Human), this protein is Zinc finger protein 40 (HIVEP1).